Here is a 240-residue protein sequence, read N- to C-terminus: Ribonuclease PH (240 aa).

Phosphate contacts are provided by residues Arg-87 and 125–127; that span reads GTR.

This sequence belongs to the RNase PH family. In terms of assembly, homohexameric ring arranged as a trimer of dimers.

The enzyme catalyses tRNA(n+1) + phosphate = tRNA(n) + a ribonucleoside 5'-diphosphate. Phosphorolytic 3'-5' exoribonuclease that plays an important role in tRNA 3'-end maturation. Removes nucleotide residues following the 3'-CCA terminus of tRNAs; can also add nucleotides to the ends of RNA molecules by using nucleoside diphosphates as substrates, but this may not be physiologically important. Probably plays a role in initiation of 16S rRNA degradation (leading to ribosome degradation) during starvation. The sequence is that of Ribonuclease PH from Pseudomonas putida (strain ATCC 47054 / DSM 6125 / CFBP 8728 / NCIMB 11950 / KT2440).